Reading from the N-terminus, the 398-residue chain is ORC1-type DNA replication protein 1 (398 aa).

ATP contacts are provided by residues 67–71 (TGKTA), Tyr208, and Arg220.

This sequence belongs to the CDC6/cdc18 family.

In terms of biological role, involved in regulation of DNA replication. This is ORC1-type DNA replication protein 1 (cdc6-1) from Sulfurisphaera tokodaii (strain DSM 16993 / JCM 10545 / NBRC 100140 / 7) (Sulfolobus tokodaii).